The primary structure comprises 197 residues: Adenylate kinase (197 aa).

19–24 (GSGKGT) lines the ATP pocket. An NMP region spans residues 39–68 (SSGDLLRAEVQSGSPKGKELKAMMERGELV). Residues Ser-40, Arg-45, 66–68 (ELV), 95–98 (RYPR), and Gln-102 contribute to the AMP site. An LID region spans residues 132 to 142 (KRAETSNRVDD). Arg-133 contributes to the ATP binding site. Arg-139 and Arg-150 together coordinate AMP. Position 178 (Gly-178) interacts with ATP.

Belongs to the adenylate kinase family. Monomer.

It is found in the cytoplasm. The catalysed reaction is AMP + ATP = 2 ADP. Catalyzes the reversible transfer of the terminal phosphate group between ATP and AMP. Plays an important role in cellular energy homeostasis and in adenine nucleotide metabolism. In Schistosoma mansoni (Blood fluke), this protein is Adenylate kinase.